The sequence spans 610 residues: Elongation factor 4 (610 aa).

The 183-residue stretch at 11–193 (EKIRNFSIIA…QIVEKVPAPS (183 aa)) folds into the tr-type G domain. GTP is bound by residues 23–28 (DHGKST) and 140–143 (NKID).

Belongs to the TRAFAC class translation factor GTPase superfamily. Classic translation factor GTPase family. LepA subfamily.

Its subcellular location is the cell membrane. It catalyses the reaction GTP + H2O = GDP + phosphate + H(+). Functionally, required for accurate and efficient protein synthesis under certain stress conditions. May act as a fidelity factor of the translation reaction, by catalyzing a one-codon backward translocation of tRNAs on improperly translocated ribosomes. Back-translocation proceeds from a post-translocation (POST) complex to a pre-translocation (PRE) complex, thus giving elongation factor G a second chance to translocate the tRNAs correctly. Binds to ribosomes in a GTP-dependent manner. The protein is Elongation factor 4 of Streptococcus uberis (strain ATCC BAA-854 / 0140J).